We begin with the raw amino-acid sequence, 157 residues long: Crossover junction endodeoxyribonuclease RuvC (157 aa).

Active-site residues include D7, E66, and D139. 3 residues coordinate Mg(2+): D7, E66, and D139.

It belongs to the RuvC family. As to quaternary structure, homodimer which binds Holliday junction (HJ) DNA. The HJ becomes 2-fold symmetrical on binding to RuvC with unstacked arms; it has a different conformation from HJ DNA in complex with RuvA. In the full resolvosome a probable DNA-RuvA(4)-RuvB(12)-RuvC(2) complex forms which resolves the HJ. Mg(2+) serves as cofactor.

The protein localises to the cytoplasm. The enzyme catalyses Endonucleolytic cleavage at a junction such as a reciprocal single-stranded crossover between two homologous DNA duplexes (Holliday junction).. The RuvA-RuvB-RuvC complex processes Holliday junction (HJ) DNA during genetic recombination and DNA repair. Endonuclease that resolves HJ intermediates. Cleaves cruciform DNA by making single-stranded nicks across the HJ at symmetrical positions within the homologous arms, yielding a 5'-phosphate and a 3'-hydroxyl group; requires a central core of homology in the junction. The consensus cleavage sequence is 5'-(A/T)TT(C/G)-3'. Cleavage occurs on the 3'-side of the TT dinucleotide at the point of strand exchange. HJ branch migration catalyzed by RuvA-RuvB allows RuvC to scan DNA until it finds its consensus sequence, where it cleaves and resolves the cruciform DNA. The chain is Crossover junction endodeoxyribonuclease RuvC from Helicobacter pylori (strain Shi470).